Reading from the N-terminus, the 380-residue chain is Cytochrome b (380 aa).

4 consecutive transmembrane segments (helical) span residues 33–53 (FGSL…FLAM), 77–98 (WLIR…YMHI), 113–133 (WNIG…GYVL), and 178–198 (FFAF…LHLL). Residues H83 and H97 each coordinate heme b. Residues H182 and H196 each contribute to the heme b site. H201 contacts a ubiquinone. The next 4 helical transmembrane spans lie at 226-246 (YKDL…ALFA), 288-308 (LGGV…PILH), 320-340 (LTQF…WIGG), and 347-367 (FIII…VLSP).

It belongs to the cytochrome b family. As to quaternary structure, the cytochrome bc1 complex contains 3 respiratory subunits (MT-CYB, CYC1 and UQCRFS1), 2 core proteins (UQCRC1 and UQCRC2) and probably 6 low-molecular weight proteins. Heme b serves as cofactor.

The protein localises to the mitochondrion inner membrane. In terms of biological role, component of the ubiquinol-cytochrome c reductase complex (complex III or cytochrome b-c1 complex) that is part of the mitochondrial respiratory chain. The b-c1 complex mediates electron transfer from ubiquinol to cytochrome c. Contributes to the generation of a proton gradient across the mitochondrial membrane that is then used for ATP synthesis. This chain is Cytochrome b (mt-cyb), found in Oncorhynchus mykiss (Rainbow trout).